A 120-amino-acid polypeptide reads, in one-letter code: MGDEDLIELKFRLADGTDIGPSKYSQFMTVASLKEKIIAQWPKDKENAPKMINEVKLINGGKILENNKTLSEARSLITIGELPGIVTTMHVVLRPPLFEKKKEKLQNDPPRKSHCVCCIL.

In terms of domain architecture, Ubiquitin-like spans 7–72 (IELKFRLADG…ILENNKTLSE (66 aa)). Residue C115 is the site of S-palmitoyl cysteine attachment. Position 117 is a cysteine methyl ester (C117). C117 is lipidated: S-geranylgeranyl cysteine. The propeptide at 118-120 (CIL) is removed in mature form.

In terms of tissue distribution, ubiquitous.

The protein localises to the cell membrane. May serve as docking site to facilitate the association of other proteins to the plasma membrane. This is Membrane-anchored ubiquitin-fold protein 5 (MUB5) from Arabidopsis thaliana (Mouse-ear cress).